The sequence spans 200 residues: Dephospho-CoA kinase (200 aa).

The DPCK domain maps to 2–200 (LIAVVGKAGV…CHHGHYQTPK (199 aa)). ATP is bound at residue 10-15 (GVGKTT).

It belongs to the CoaE family.

It is found in the cytoplasm. It catalyses the reaction 3'-dephospho-CoA + ATP = ADP + CoA + H(+). It participates in cofactor biosynthesis; coenzyme A biosynthesis; CoA from (R)-pantothenate: step 5/5. In terms of biological role, catalyzes the phosphorylation of the 3'-hydroxyl group of dephosphocoenzyme A to form coenzyme A. The sequence is that of Dephospho-CoA kinase from Mycoplasma pneumoniae (strain ATCC 29342 / M129 / Subtype 1) (Mycoplasmoides pneumoniae).